Consider the following 236-residue polypeptide: Ubiquinone biosynthesis O-methyltransferase (236 aa).

The S-adenosyl-L-methionine site is built by R36, G56, D77, and M125.

Belongs to the methyltransferase superfamily. UbiG/COQ3 family.

It catalyses the reaction a 3-demethylubiquinol + S-adenosyl-L-methionine = a ubiquinol + S-adenosyl-L-homocysteine + H(+). The enzyme catalyses a 3-(all-trans-polyprenyl)benzene-1,2-diol + S-adenosyl-L-methionine = a 2-methoxy-6-(all-trans-polyprenyl)phenol + S-adenosyl-L-homocysteine + H(+). It functions in the pathway cofactor biosynthesis; ubiquinone biosynthesis. In terms of biological role, O-methyltransferase that catalyzes the 2 O-methylation steps in the ubiquinone biosynthetic pathway. In Glaesserella parasuis serovar 5 (strain SH0165) (Haemophilus parasuis), this protein is Ubiquinone biosynthesis O-methyltransferase.